Here is a 485-residue protein sequence, read N- to C-terminus: Hemolysin (485 aa).

The signal sequence occupies residues 1 to 28 (MKNFKGRKFLTCVLVSLCTLNYSSISFA). Transmembrane regions (beta stranded) follow at residues 196–209 (KAQI…NAKY), 216–225 (IDFNAVANGE), 294–303 (SKDVQAAFKA), and 311–323 (ETSG…FEES). Positions 465–475 (ECTGLAWEWWR) match the Conserved undecapeptide motif.

It belongs to the cholesterol-dependent cytolysin family. As to quaternary structure, homooligomeric pore complex of 35 to 50 subunits; when inserted in the host membrane.

Its subcellular location is the secreted. The protein localises to the host cell membrane. Its function is as follows. A cholesterol-dependent toxin with hemolytic activity against host red blood cells. Causes cytolysis by forming pores in cholesterol containing host membranes. binding to target membranes, the protein undergoes a major conformation change, leading to its insertion in the host membrane and formation of an oligomeric pore complex. Cholesterol is required for binding to host membranes, membrane insertion and pore formation; cholesterol binding is mediated by a Thr-Leu pair in the C-terminus. Can be reversibly inactivated by oxidation. In Bacillus cereus, this protein is Hemolysin.